Here is a 299-residue protein sequence, read N- to C-terminus: 33 kDa chaperonin (299 aa).

Intrachain disulfides connect Cys-234–Cys-236 and Cys-268–Cys-271.

Belongs to the HSP33 family. Under oxidizing conditions two disulfide bonds are formed involving the reactive cysteines. Under reducing conditions zinc is bound to the reactive cysteines and the protein is inactive.

The protein localises to the cytoplasm. In terms of biological role, redox regulated molecular chaperone. Protects both thermally unfolding and oxidatively damaged proteins from irreversible aggregation. Plays an important role in the bacterial defense system toward oxidative stress. This chain is 33 kDa chaperonin, found in Pseudomonas putida (strain ATCC 47054 / DSM 6125 / CFBP 8728 / NCIMB 11950 / KT2440).